Consider the following 204-residue polypeptide: Ribosomal RNA small subunit methyltransferase J (204 aa).

S-adenosyl-L-methionine contacts are provided by residues 55 to 56, 71 to 72, and D123; these read RD and ER.

The protein belongs to the methyltransferase superfamily. RsmJ family.

The protein resides in the cytoplasm. It carries out the reaction guanosine(1516) in 16S rRNA + S-adenosyl-L-methionine = N(2)-methylguanosine(1516) in 16S rRNA + S-adenosyl-L-homocysteine + H(+). Its function is as follows. Specifically methylates the guanosine in position 1516 of 16S rRNA. This Rhodopseudomonas palustris (strain ATCC BAA-98 / CGA009) protein is Ribosomal RNA small subunit methyltransferase J.